Here is a 195-residue protein sequence, read N- to C-terminus: Protein GrpE (195 aa).

Over residues 1–24 (MSSKEQNTPDEQVSQESEMEQGQQ) the composition is skewed to polar residues. The segment at 1-40 (MSSKEQNTPDEQVSQESEMEQGQQAEAAPETVDVVDPRDE) is disordered.

It belongs to the GrpE family. Homodimer.

The protein resides in the cytoplasm. In terms of biological role, participates actively in the response to hyperosmotic and heat shock by preventing the aggregation of stress-denatured proteins, in association with DnaK and GrpE. It is the nucleotide exchange factor for DnaK and may function as a thermosensor. Unfolded proteins bind initially to DnaJ; upon interaction with the DnaJ-bound protein, DnaK hydrolyzes its bound ATP, resulting in the formation of a stable complex. GrpE releases ADP from DnaK; ATP binding to DnaK triggers the release of the substrate protein, thus completing the reaction cycle. Several rounds of ATP-dependent interactions between DnaJ, DnaK and GrpE are required for fully efficient folding. This is Protein GrpE from Sodalis glossinidius (strain morsitans).